We begin with the raw amino-acid sequence, 468 residues long: MSKTLPKDFIFGGATAAYQAEGATHADGKGPVAWDKYLEDNYWYTAEPASDFYHQYPVDLKLAEEFGVNGIRISIAWSRIFPKGYGAVNPKGLAFYHNLFAECHKRHVEPFVTLHHFDTPEALHSNGDFLNRENIEHFVNYAEFCFKEFPEVNYWTTFNEIGPIGDGQYLVGKFPPGIQYDLAKVFQSHHNMMVAHSKAVKLFKDGGYSGEIGVVHALPTKYPYDPNNPADIRAAELEDIIHNKFILDATYLGKYSEKTMEGVNHILAVNGGQLDLREEDFAALEAAKDLNDFLGINYYMSDWMRAFDGETEITHNAKGEKGSSKYQIKGVGRREAPVNVPKTDWDWIIYPQGLYDQIMRVKQDYPNYKKIYITENGLGYKDEFVNHTVYDDARIDYVKKHLEVLSDAIADGANVKGYFIWSLMDVFSWSNGYEKRYGLFYVDFDTQERYPKKSAYWYKKLAETQIID.

The D-galactose 6-phosphate site is built by glutamine 19, histidine 116, asparagine 159, glutamate 160, and asparagine 297. Glutamate 160 serves as the catalytic Proton donor. Residue glutamate 375 is the Nucleophile of the active site. D-galactose 6-phosphate contacts are provided by serine 428, tryptophan 429, lysine 435, and tyrosine 437.

This sequence belongs to the glycosyl hydrolase 1 family.

The catalysed reaction is a 6-phospho-beta-D-galactoside + H2O = D-galactose 6-phosphate + an alcohol. The protein operates within carbohydrate metabolism; lactose degradation; D-galactose 6-phosphate and beta-D-glucose from lactose 6-phosphate: step 1/1. This is 6-phospho-beta-galactosidase from Streptococcus mutans serotype c (strain ATCC 700610 / UA159).